An 805-amino-acid chain; its full sequence is Nitrite reductase [NAD(P)H] (805 aa).

Residue 43–79 (YNRILLSKVLQGDTDIKDITLNDWDWYEENNIQLYTN) participates in FAD binding. An NADP(+)-binding site is contributed by 193 to 223 (LQNELEKQGMTFLLEKQTEEIVGDDRVEGLR). [2Fe-2S] cluster-binding residues include cysteine 418, cysteine 420, cysteine 453, and cysteine 456. The [4Fe-4S] cluster site is built by cysteine 635, cysteine 641, cysteine 675, and cysteine 679. A siroheme-binding site is contributed by cysteine 679.

The protein belongs to the nitrite and sulfite reductase 4Fe-4S domain family. As to quaternary structure, homodimer. It depends on siroheme as a cofactor. [2Fe-2S] cluster is required as a cofactor. The cofactor is [4Fe-4S] cluster. FAD serves as cofactor.

It carries out the reaction NH4(+) + 3 NADP(+) + 2 H2O = nitrite + 3 NADPH + 5 H(+). The catalysed reaction is NH4(+) + 3 NAD(+) + 2 H2O = nitrite + 3 NADH + 5 H(+). It participates in nitrogen metabolism; nitrate reduction (assimilation). Its function is as follows. Required for nitrite assimilation. The polypeptide is Nitrite reductase [NAD(P)H] (nasD) (Bacillus subtilis (strain 168)).